The sequence spans 589 residues: Putative phospholipase B-like 2 (589 aa).

Positions 1 to 41 (MVGQMYCYPGSHLARALTRALALALVLALLVGPFLSGLAGA) are cleaved as a signal peptide. 2 N-linked (GlcNAc...) asparagine glycosylation sites follow: Asn88 and Asn110. An intrachain disulfide couples Cys142 to Cys152. N-linked (GlcNAc...) asparagine glycosylation is found at Asn231, Asn436, and Asn465. Cysteines 492 and 495 form a disulfide. Asn515 carries an N-linked (GlcNAc...) asparagine glycan.

This sequence belongs to the phospholipase B-like family. Interacts with IGF2R. In terms of processing, the p76 protein is synthesized as a 80 kDa precursor which is then processed into a N-terminal 32 kDa form and a C-terminal 45 kDa form. Glycosylated; contains mannose 6-phosphate sugars. Ubiquitously expressed, with highest levels in heart, brain and liver.

Its subcellular location is the lysosome lumen. In terms of biological role, putative phospholipase. The polypeptide is Putative phospholipase B-like 2 (PLBD2) (Homo sapiens (Human)).